Here is a 414-residue protein sequence, read N- to C-terminus: NAC domain-containing protein 35 (414 aa).

Over residues M1 to E21 the composition is skewed to polar residues. The disordered stretch occupies residues M1 to D47. The segment covering K22 to D47 has biased composition (basic and acidic residues). The NAC domain maps to V51–R198. The DNA-binding element occupies I149–H204. The tract at residues G200 to I251 is disordered. Residues H233–I251 are compositionally biased toward low complexity.

Expressed in aerial organs in early stages of seedling development.

The protein resides in the nucleus. Functionally, transcription factor that acts as a floral repressor. Controls flowering time by negatively regulating CONSTANS (CO) expression in a GIGANTEA (GI)-independent manner. Regulates the plant cold response by positive regulation of the cold response genes COR15A and KIN1. May coordinate cold response and flowering time. The polypeptide is NAC domain-containing protein 35 (Arabidopsis thaliana (Mouse-ear cress)).